Consider the following 722-residue polypeptide: Zinc finger BED domain-containing protein RICESLEEPER 1 (722 aa).

A BED-type zinc finger spans residues 66 to 126 (RKKSLVWEHF…GSCPKIKNQE (61 aa)). Zn(2+) contacts are provided by Cys89, Cys92, His113, and Cys119. The disordered stretch occupies residues 572–592 (VEQGGGNNAPASENSTQATAP). Over residues 580–592 (APASENSTQATAP) the composition is skewed to polar residues. The tract at residues 617 to 702 (ELEQYLDESL…EALVCAKDWL (86 aa)) is HATC (Hobo-Ac-Tam3) domain.

As to quaternary structure, homodimer.

It is found in the nucleus. Functionally, transposase-like protein that is essential for plant growth and development. May regulate global gene expression by recruiting other cellular factors. The protein is Zinc finger BED domain-containing protein RICESLEEPER 1 of Oryza sativa subsp. japonica (Rice).